The primary structure comprises 289 residues: Glyceraldehyde-3-phosphate dehydrogenase (289 aa).

NAD(+) is bound by residues Asp12 and Arg57. D-glyceraldehyde 3-phosphate contacts are provided by residues Ser128–Thr130, Thr159, Thr188–Gly189, and Arg211. Cys129 functions as the Nucleophile in the catalytic mechanism.

Belongs to the glyceraldehyde-3-phosphate dehydrogenase family. In terms of assembly, homotetramer.

Its subcellular location is the cytoplasm. It carries out the reaction D-glyceraldehyde 3-phosphate + phosphate + NAD(+) = (2R)-3-phospho-glyceroyl phosphate + NADH + H(+). The protein operates within carbohydrate degradation; glycolysis; pyruvate from D-glyceraldehyde 3-phosphate: step 1/5. This chain is Glyceraldehyde-3-phosphate dehydrogenase (GPD), found in Amanita muscaria (Fly agaric).